Reading from the N-terminus, the 683-residue chain is THO complex subunit 5 (683 aa).

The tract at residues 1–42 is disordered; that stretch reads MSSESSKKRKPKVIRSDGAPAEGKRNRSDTEQEGKYYSEEAE. An N-acetylserine modification is found at S2. An interaction with CSF1R region spans residues 2–144; it reads SSESSKKRKP…YEVMHLQKEI (143 aa). Residues 2–199 are interaction with THOC7; sequence SSESSKKRKP…RLDWELEQRK (198 aa). Phosphoserine occurs at positions 5 and 6. Positions 7-10 match the Nuclear localization signal motif; it reads KKRK. Residues 22–42 show a composition bias toward basic and acidic residues; it reads EGKRNRSDTEQEGKYYSEEAE. A coiled-coil region spans residues 81-247; sequence AIEIEERRIQ…QASLPVQEYL (167 aa). Residue K153 forms a Glycyl lysine isopeptide (Lys-Gly) (interchain with G-Cter in SUMO2) linkage. The residue at position 225 (Y225) is a Phosphotyrosine; by SRC. A tandem RWD domains region spans residues 247 to 683; sequence LFMPFDQAHK…NHPQGFFSHR (437 aa). A disordered region spans residues 301 to 336; sequence FKPPEDSQDDESDSDAEEEQTTKRRRPTLGVQLDDK. Residues 306–319 show a composition bias toward acidic residues; the sequence is DSQDDESDSDAEEE. S307, S312, and S314 each carry phosphoserine. T328 bears the Phosphothreonine mark.

Belongs to the THOC5 family. As to quaternary structure, component of the THO subcomplex, which is composed of THOC1, THOC2, THOC3, THOC5, THOC6 and THOC7. The THO subcomplex interacts with DDX39B to form the THO-DDX39B complex which multimerizes into a 28-subunit tetrameric assembly. Component of the transcription/export (TREX) complex at least composed of ALYREF/THOC4, DDX39B, SARNP/CIP29, CHTOP and the THO subcomplex; in the complex interacts with THOC1, THOC2, THOC5, THOC6 and THOC7; forms a coiled-coil dimer with THOC7; together with THOC6 and THOC7, plays a key structural role in oligomerization of the THO-DDX39B complex. TREX seems to have a dynamic structure involving ATP-dependent remodeling. Interacts with phosphorylated CSF1R. Interacts (via N-terminus) with the NTF2 domain of NXF1. Forms a complex with CEBPB. Interacts with CPSF6; indicative for an association with the cleavage factor Im (CFIm) complex. Interacts with LUZP4. Interacts with NCBP3. In terms of processing, phosphorylated on tyrosine upon binding to activated CSF1R; which causes a dissociation of the two proteins. Phosphorylation on Ser-5 and/or Ser-6 is required for nuclear export. Phosphorylated on Thr-328 in insulin-stimulated adipocytes. Phosphorylation at Tyr-225 modulates mRNA binding. In terms of tissue distribution, ubiquitously expressed.

The protein resides in the nucleus. The protein localises to the cytoplasm. In terms of biological role, component of the THO subcomplex of the TREX complex which is thought to couple mRNA transcription, processing and nuclear export, and which specifically associates with spliced mRNA and not with unspliced pre-mRNA. Plays a key structural role in the oligomerization of the THO-DDX39B complex. TREX is recruited to spliced mRNAs by a transcription-independent mechanism, binds to mRNA upstream of the exon-junction complex (EJC) and is recruited in a splicing- and cap-dependent manner to a region near the 5' end of the mRNA where it functions in mRNA export to the cytoplasm via the TAP/NXF1 pathway. THOC5 in conjunction with ALYREF/THOC4 functions in NXF1-NXT1 mediated nuclear export of HSP70 mRNA; both proteins enhance the RNA binding activity of NXF1 and are required for NXF1 localization to the nuclear rim. Involved in transcription elongation and genome stability. Involved in alternative polyadenylation site choice by recruiting CPSF6 to 5' region of target genes; probably mediates association of the TREX and CFIm complexes. Functionally, regulates the expression of myeloid transcription factors CEBPA, CEBPB and GAB2 by enhancing the levels of phosphatidylinositol 3,4,5-trisphosphate. May be involved in the differentiation of granulocytes and adipocytes. Essential for hematopoietic primitive cell survival and plays an integral role in monocytic development. (Microbial infection) The TREX complex is essential for the export of Kaposi's sarcoma-associated herpesvirus (KSHV) intronless mRNAs and infectious virus production. This is THO complex subunit 5 (THOC5) from Homo sapiens (Human).